We begin with the raw amino-acid sequence, 147 residues long: Small ribosomal subunit protein uS5 (147 aa).

The 64-residue stretch at 9–72 folds into the S5 DRBM domain; it reads FQEVVVNIGR…DDAFKNLIHV (64 aa).

Belongs to the universal ribosomal protein uS5 family. Part of the 30S ribosomal subunit. Contacts proteins S4 and S8.

Its function is as follows. With S4 and S12 plays an important role in translational accuracy. Located at the back of the 30S subunit body where it stabilizes the conformation of the head with respect to the body. The chain is Small ribosomal subunit protein uS5 from Helicobacter pylori (strain J99 / ATCC 700824) (Campylobacter pylori J99).